Reading from the N-terminus, the 128-residue chain is MTGFRDQLGVHAQALVLRETRNNLLTSNIANAATPHYKARDIDFGAELARASGNGTLRTTEARHFAAGGPAARGEALYRDPVTPSLDGNTVEMAVEQMEFAENTLRYQTSLALLNRRISGLMTAIKGE.

Belongs to the flagella basal body rod proteins family. The basal body constitutes a major portion of the flagellar organelle and consists of a number of rings mounted on a central rod. In Gram-negative bacteria, at least four rings, L, P, S and M are present, whereas Gram-positive bacteria lack the L and P rings. The rod consists of about 26 subunits of FlgG in the distal portion, and FlgB, FlgC and FlgF build up the proximal portion of the rod with about 6 subunits each. Rod assembly occurs by export via the flagellum-specific pathway of its constituent proteins and by their incorporation into the rod structure in the probable order of FlgB, FlgC, FlgF and FlgG. Another protein, FliE, also assembles onto the stable rod structure.

The protein localises to the bacterial flagellum basal body. Functionally, structural component of flagellum, the bacterial motility apparatus. Part of the rod structure of flagellar basal body. This is Flagellar basal body rod protein FlgB from Cereibacter sphaeroides (strain ATCC 17023 / DSM 158 / JCM 6121 / CCUG 31486 / LMG 2827 / NBRC 12203 / NCIMB 8253 / ATH 2.4.1.) (Rhodobacter sphaeroides).